A 204-amino-acid chain; its full sequence is Minor allergen Alt a 7 (204 aa).

Positions 5-195 (IAIVYYSMYG…NIAQAQGKAF (191 aa)) constitute a Flavodoxin-like domain.

This sequence belongs to the WrbA family.

It localises to the cytoplasm. The polypeptide is Minor allergen Alt a 7 (ALTA7) (Alternaria alternata (Alternaria rot fungus)).